Reading from the N-terminus, the 211-residue chain is LexA repressor (211 aa).

The H-T-H motif DNA-binding region spans 27-47; it reads QTEIARAFGFKGVRAVQHHLD. Residues serine 131 and lysine 168 each act as for autocatalytic cleavage activity in the active site.

It belongs to the peptidase S24 family. As to quaternary structure, homodimer.

It catalyses the reaction Hydrolysis of Ala-|-Gly bond in repressor LexA.. Its function is as follows. Represses a number of genes involved in the response to DNA damage (SOS response), including recA and lexA. In the presence of single-stranded DNA, RecA interacts with LexA causing an autocatalytic cleavage which disrupts the DNA-binding part of LexA, leading to derepression of the SOS regulon and eventually DNA repair. The chain is LexA repressor from Xylella fastidiosa (strain 9a5c).